We begin with the raw amino-acid sequence, 1353 residues long: Spike glycoprotein (1353 aa).

The N-terminal stretch at 1-17 is a signal peptide; the sequence is MIHSVFLLMFLLTPTES. Residues 18–351 form the BetaCoV S1-NTD domain; the sequence is YVDVGPDSVK…NDLSQLHCSY (334 aa). Residues 18–1296 lie on the Extracellular side of the membrane; that stretch reads YVDVGPDSVK…GNYTYYNKWP (1279 aa). N-linked (GlcNAc...) asparagine; by host glycosylation is found at N66, N104, N125, N155, N166, N222, N236, and N244. Residues C185 and C237 are joined by a disulfide bond. Disulfide bonds link C339/C349 and C383/C407. A BetaCoV S1-CTD domain is found at 381 to 587; that stretch reads VECDFSPLLS…GTDTNSVCPK (207 aa). N-linked (GlcNAc...) asparagine; by host glycosylation is present at N410. 2 disulfide bridges follow: C425-C478 and C437-C585. N-linked (GlcNAc...) asparagine; by host glycosylation is found at N487, N592, N619, N719, N774, N785, and N870. Fusion peptide regions lie at residues 888–909 and 907–929; these read SAIEDLLFDKVTIADPGYMQGY and QGYDDCMQQGPASARDLICAQYV. C912 and C925 are joined by a disulfide. The tract at residues 994–1044 is heptad repeat 1; that stretch reads QKLIANKFNQALGAMQTGFTTTNEAFHKVQDAVNNNAQALSKLASELSNTF. A coiled-coil region spans residues 1023–1067; that stretch reads QDAVNNNAQALSKLASELSNTFGAISASIGDIIQRLDVLEQDAQI. 7 N-linked (GlcNAc...) asparagine; by host glycosylation sites follow: N1176, N1213, N1225, N1241, N1256, N1277, and N1288. The tract at residues 1246-1285 is heptad repeat 2; the sequence is IPNFGSLTQINTTLLDLTYEMLSLQQVVKALNESYIDLKE. The stretch at 1258-1286 forms a coiled coil; sequence TLLDLTYEMLSLQQVVKALNESYIDLKEL. Residues 1297–1317 traverse the membrane as a helical segment; that stretch reads WYIWLGFIAGLVALALCVFFI. The Cytoplasmic portion of the chain corresponds to 1318 to 1353; that stretch reads LCCTGCGTNCMGKLKCNRCCDRYEEYDLEPHKVHVH. Positions 1351 to 1353 match the KxHxx motif; that stretch reads HVH.

This sequence belongs to the betacoronaviruses spike protein family. In terms of assembly, homotrimer; each monomer consists of a S1 and a S2 subunit. The resulting peplomers protrude from the virus surface as spikes. S1 interacts with murine DPP4. In terms of processing, specific enzymatic cleavages in vivo yield mature proteins. The precursor is processed into S1 and S2 by host cell furin or another cellular protease to yield the mature S1 and S2 proteins. Additionally, a second cleavage leads to the release of a fusion peptide after viral attachment to host cell receptor. Post-translationally, the cytoplasmic Cys-rich domain is palmitoylated. Spike glycoprotein is digested within host endosomes.

The protein localises to the virion membrane. Its subcellular location is the host endoplasmic reticulum-Golgi intermediate compartment membrane. The protein resides in the host cell membrane. In terms of biological role, attaches the virion to the cell membrane by interacting with host receptor, initiating the infection. Interacts with host DPP4 to mediate virla entry. Functionally, mediates fusion of the virion and cellular membranes by acting as a class I viral fusion protein. Under the current model, the protein has at least three conformational states: pre-fusion native state, pre-hairpin intermediate state, and post-fusion hairpin state. During viral and target cell membrane fusion, the coiled coil regions (heptad repeats) assume a trimer-of-hairpins structure, positioning the fusion peptide in close proximity to the C-terminal region of the ectodomain. The formation of this structure appears to drive apposition and subsequent fusion of viral and target cell membranes. Its function is as follows. Acts as a viral fusion peptide which is unmasked following S2 cleavage occurring upon virus endocytosis. The protein is Spike glycoprotein of Middle East respiratory syndrome-related coronavirus (isolate United Kingdom/H123990006/2012) (MERS-CoV).